The chain runs to 232 residues: MKIGIIGAMEEEVTLLRDKIENRQTISLGGCEIYTGQLNGTEVALLKSGIGKVAAALGATLLLEHGKPDVIINTGSAGGLAPTLKVGDIVVSDEARYHDADVTAFGYEYGQLPGCPAGFKADDKLIAAAEACIAELNLNAVRGLIVSGDAFINGSVGLAKIRHNFPQAIAVEMEATAIAHVCHNFNVPFVVVRAISDVADQQSHLSFDEFLAVAAKQSSLMVESLVQKLAHG.

Glutamate 12 acts as the Proton acceptor in catalysis. Residues glycine 78, isoleucine 152, and 173–174 (ME) each bind substrate. Catalysis depends on aspartate 197, which acts as the Proton donor.

Belongs to the PNP/UDP phosphorylase family. MtnN subfamily. In terms of assembly, homodimer.

It catalyses the reaction S-adenosyl-L-homocysteine + H2O = S-(5-deoxy-D-ribos-5-yl)-L-homocysteine + adenine. The enzyme catalyses S-methyl-5'-thioadenosine + H2O = 5-(methylsulfanyl)-D-ribose + adenine. The catalysed reaction is 5'-deoxyadenosine + H2O = 5-deoxy-D-ribose + adenine. It functions in the pathway amino-acid biosynthesis; L-methionine biosynthesis via salvage pathway; S-methyl-5-thio-alpha-D-ribose 1-phosphate from S-methyl-5'-thioadenosine (hydrolase route): step 1/2. Its function is as follows. Catalyzes the irreversible cleavage of the glycosidic bond in both 5'-methylthioadenosine (MTA) and S-adenosylhomocysteine (SAH/AdoHcy) to adenine and the corresponding thioribose, 5'-methylthioribose and S-ribosylhomocysteine, respectively. Also cleaves 5'-deoxyadenosine, a toxic by-product of radical S-adenosylmethionine (SAM) enzymes, into 5-deoxyribose and adenine. Thus, is required for in vivo function of the radical SAM enzymes biotin synthase and lipoic acid synthase, that are inhibited by 5'-deoxyadenosine accumulation. This is 5'-methylthioadenosine/S-adenosylhomocysteine nucleosidase from Shigella boydii serotype 4 (strain Sb227).